Reading from the N-terminus, the 506-residue chain is Ent-kaurenoic acid oxidase (506 aa).

The helical transmembrane segment at 11 to 31 (AWAAGDLWVLAAAVVAGVVLV) threads the bilayer. Heme is bound at residue C451.

It belongs to the cytochrome P450 family. Heme serves as cofactor. Expressed in roots and panicles. Expressed at low levels in vegetative shoot apices, leaf sheaths, leaf blades and stems.

Its subcellular location is the endoplasmic reticulum membrane. The catalysed reaction is ent-kaur-16-en-19-oate + 3 reduced [NADPH--hemoprotein reductase] + 3 O2 = gibberellin A12 + 3 oxidized [NADPH--hemoprotein reductase] + 4 H2O + 4 H(+). The enzyme catalyses ent-kaur-16-en-19-oate + reduced [NADPH--hemoprotein reductase] + O2 = ent-7alpha-hydroxykaur-16-en-19-oate + oxidized [NADPH--hemoprotein reductase] + H2O + H(+). It catalyses the reaction ent-7alpha-hydroxykaur-16-en-19-oate + reduced [NADPH--hemoprotein reductase] + O2 = gibberellin A12 aldehyde + oxidized [NADPH--hemoprotein reductase] + 2 H2O + H(+). It carries out the reaction gibberellin A12 aldehyde + reduced [NADPH--hemoprotein reductase] + O2 = gibberellin A12 + oxidized [NADPH--hemoprotein reductase] + H2O + 2 H(+). The protein operates within plant hormone biosynthesis; gibberellin biosynthesis. Involved in gibberellin (GA) biosynthesis. Catalyzes three successive oxidations of ent-kaurenoic acid giving gibberellin 12 (GA12), a key step in GAs biosynthesis. GAs, which are involved many processes, including stem elongation, play a central role in plant development. Required for pollen germination and elongation. In Oryza sativa subsp. japonica (Rice), this protein is Ent-kaurenoic acid oxidase.